A 207-amino-acid polypeptide reads, in one-letter code: C-type lectin domain family 2 member D (207 aa).

The Cytoplasmic portion of the chain corresponds to 1-41 (MCVTKASLPMLSPTGSPQEVEVGKILQGKRHGTISPESCAK). Residues S7 and S12 each carry the phosphoserine modification. The helical; Signal-anchor for type II membrane protein transmembrane segment at 42–62 (LYCYYGVIMVLTVAVIALSVA) threads the bilayer. The Extracellular portion of the chain corresponds to 63-207 (LSATKTEQIP…LHCQTPFFPS (145 aa)). C80 and C91 form a disulfide bridge. The 116-residue stretch at 87–202 (VENKCFYFSE…LNSYSLHCQT (116 aa)) folds into the C-type lectin domain. Residue N100 is glycosylated (N-linked (GlcNAc...) asparagine).

Homodimer; disulfide-linked. In terms of processing, N-glycosylated. As to expression, detected in fetal heart, brain, lung, chondrocytes, perichondrium and osteoblasts, and in adult splenocytes, thymocytes, lymph-node cells, osteoblasts, growth plate chondrocytes and skeletal muscle overlying the bone (at protein level). Ubiquitous. Detected in thymus, bone marrow, lung, gut, heart, skeletal muscle, ovary, spleen, ileum, liver and kidney.

The protein localises to the cell membrane. In terms of biological role, receptor for KLRB1B that protects target cells against natural killer cell-mediated lysis. Inhibits osteoclast formation. Binds high molecular weight sulfated glycosaminoglycans. The sequence is that of C-type lectin domain family 2 member D (Clec2d) from Mus musculus (Mouse).